The sequence spans 199 residues: MSNPQTTIAYSLCHARASLTSALPDAAQVVHVFEYGTRAIMVRGRERQDRLPRGGVVIQHTPIGLLVIIDCRAEFCAYRFIGRDSNQKLERGWDAHMYAYPFDSWVSSSRGESARSATAGILTVVWTADTIYITATIYGSPPEETPGAAHGVGAAPPPPTTACPGTAEFLQPTADLLVEVLREIQLSPALEYADKLLGS.

It belongs to the alphaherpesvirinae HHV-1 UL4 family.

Its subcellular location is the host nucleus. This chain is Nuclear protein UL4, found in Homo sapiens (Human).